A 597-amino-acid polypeptide reads, in one-letter code: Putative Xaa-Pro dipeptidyl-peptidase (597 aa).

Catalysis depends on charge relay system residues Ser-224, Asp-336, and His-367.

It belongs to the peptidase S15 family.

It catalyses the reaction Hydrolyzes Xaa-Pro-|- bonds to release unblocked, N-terminal dipeptides from substrates including Ala-Pro-|-p-nitroanilide and (sequentially) Tyr-Pro-|-Phe-Pro-|-Gly-Pro-|-Ile.. The sequence is that of Putative Xaa-Pro dipeptidyl-peptidase from Bacillus anthracis.